The following is a 130-amino-acid chain: uncharacterized protein (130 aa).

This is an uncharacterized protein from Citrus leprosis virus C (isolate Citrus sinesis/Brazil/Cordeiropolis/2003) (CiLV-C).